The following is a 272-amino-acid chain: Shikimate dehydrogenase (NADP(+)) (272 aa).

Shikimate is bound by residues Ser14–Ser16 and Thr61. Lys65 acts as the Proton acceptor in catalysis. Glu77 lines the NADP(+) pocket. 2 residues coordinate shikimate: Asn86 and Asp102. NADP(+) contacts are provided by residues Gly126 to Ala130, Asn149 to Arg154, and Met213. Residue Tyr215 coordinates shikimate. Gly237 contributes to the NADP(+) binding site.

This sequence belongs to the shikimate dehydrogenase family. Homodimer.

The catalysed reaction is shikimate + NADP(+) = 3-dehydroshikimate + NADPH + H(+). The protein operates within metabolic intermediate biosynthesis; chorismate biosynthesis; chorismate from D-erythrose 4-phosphate and phosphoenolpyruvate: step 4/7. Involved in the biosynthesis of the chorismate, which leads to the biosynthesis of aromatic amino acids. Catalyzes the reversible NADPH linked reduction of 3-dehydroshikimate (DHSA) to yield shikimate (SA). This Escherichia coli (strain SMS-3-5 / SECEC) protein is Shikimate dehydrogenase (NADP(+)).